A 267-amino-acid chain; its full sequence is Mediator of RNA polymerase II transcription subunit 8 (267 aa).

Coiled coils occupy residues Met-1–Leu-26 and Asp-116–Glu-160. Residues Gly-190–Arg-267 form a disordered region. A compositionally biased stretch (polar residues) spans Pro-227–Gln-245.

It belongs to the Mediator complex subunit 8 family. In terms of assembly, component of the Mediator complex. May be part of a multisubunit E3 ubiquitin-protein ligase complex.

It is found in the nucleus. Its pathway is protein modification; protein ubiquitination. Functionally, component of the Mediator complex, a coactivator involved in the regulated transcription of nearly all RNA polymerase II-dependent genes. Mediator functions as a bridge to convey information from gene-specific regulatory proteins to the basal RNA polymerase II transcription machinery. Mediator is recruited to promoters by direct interactions with regulatory proteins and serves as a scaffold for the assembly of a functional preinitiation complex with RNA polymerase II and the general transcription factors. May play a role as a target recruitment subunit in E3 ubiquitin-protein ligase complexes and thus in ubiquitination and subsequent proteasomal degradation of target proteins. The polypeptide is Mediator of RNA polymerase II transcription subunit 8 (med8) (Xenopus tropicalis (Western clawed frog)).